An 84-amino-acid polypeptide reads, in one-letter code: Polyketide-8 synthase acyl carrier protein 1 (84 aa).

The region spanning 7–82 (AARKQEIKEI…GVYVVVSEAA (76 aa)) is the Carrier domain. Ser42 carries the O-(pantetheine 4'-phosphoryl)serine modification.

4'-phosphopantetheine is transferred from CoA to a specific serine of the apo-ACP-like protein.

Acyl carrier protein. The sequence is that of Polyketide-8 synthase acyl carrier protein 1 from Streptomyces avermitilis (strain ATCC 31267 / DSM 46492 / JCM 5070 / NBRC 14893 / NCIMB 12804 / NRRL 8165 / MA-4680).